Consider the following 1202-residue polypeptide: DNA-directed RNA polymerase subunit beta (1202 aa).

A disordered region spans residues 1154-1202 (NMDEDDDEVVNVDALAKYAEEHKADDKKNEEENKSEATSTTTDDKTNQN). Over residues 1171 to 1188 (YAEEHKADDKKNEEENKS) the composition is skewed to basic and acidic residues.

It belongs to the RNA polymerase beta chain family. As to quaternary structure, the RNAP catalytic core consists of 2 alpha, 1 beta, 1 beta' and 1 omega subunit. When a sigma factor is associated with the core the holoenzyme is formed, which can initiate transcription.

The enzyme catalyses RNA(n) + a ribonucleoside 5'-triphosphate = RNA(n+1) + diphosphate. DNA-dependent RNA polymerase catalyzes the transcription of DNA into RNA using the four ribonucleoside triphosphates as substrates. This chain is DNA-directed RNA polymerase subunit beta, found in Limosilactobacillus reuteri (strain DSM 20016) (Lactobacillus reuteri).